The primary structure comprises 621 residues: tRNA uridine 5-carboxymethylaminomethyl modification enzyme MnmG (621 aa).

Residue 11–16 (GAGHAG) participates in FAD binding. 271 to 285 (GPRYCPSVEDKINRF) is an NAD(+) binding site.

This sequence belongs to the MnmG family. Homodimer. Heterotetramer of two MnmE and two MnmG subunits. The cofactor is FAD.

The protein localises to the cytoplasm. Functionally, NAD-binding protein involved in the addition of a carboxymethylaminomethyl (cmnm) group at the wobble position (U34) of certain tRNAs, forming tRNA-cmnm(5)s(2)U34. This chain is tRNA uridine 5-carboxymethylaminomethyl modification enzyme MnmG, found in Cytophaga hutchinsonii (strain ATCC 33406 / DSM 1761 / CIP 103989 / NBRC 15051 / NCIMB 9469 / D465).